The chain runs to 210 residues: Na(+)-translocating NADH-quinone reductase subunit D (210 aa).

5 helical membrane-spanning segments follow: residues 42 to 62 (FVMT…VSLI), 72 to 92 (IIVQ…VLKA), 103 to 123 (VFVS…AFAM), 131 to 151 (FIDG…VAFF), and 178 to 198 (NGLM…IWAI).

It belongs to the NqrDE/RnfAE family. In terms of assembly, composed of six subunits; NqrA, NqrB, NqrC, NqrD, NqrE and NqrF.

It localises to the cell inner membrane. The catalysed reaction is a ubiquinone + n Na(+)(in) + NADH + H(+) = a ubiquinol + n Na(+)(out) + NAD(+). NQR complex catalyzes the reduction of ubiquinone-1 to ubiquinol by two successive reactions, coupled with the transport of Na(+) ions from the cytoplasm to the periplasm. NqrA to NqrE are probably involved in the second step, the conversion of ubisemiquinone to ubiquinol. The polypeptide is Na(+)-translocating NADH-quinone reductase subunit D (Aliivibrio fischeri (strain ATCC 700601 / ES114) (Vibrio fischeri)).